Consider the following 318-residue polypeptide: 4-hydroxy-3-methylbut-2-enyl diphosphate reductase (318 aa).

Cysteine 12 serves as a coordination point for [4Fe-4S] cluster. Residues histidine 41 and histidine 74 each contribute to the (2E)-4-hydroxy-3-methylbut-2-enyl diphosphate site. Positions 41 and 74 each coordinate dimethylallyl diphosphate. Isopentenyl diphosphate contacts are provided by histidine 41 and histidine 74. Cysteine 96 serves as a coordination point for [4Fe-4S] cluster. Histidine 124 is a binding site for (2E)-4-hydroxy-3-methylbut-2-enyl diphosphate. Histidine 124 provides a ligand contact to dimethylallyl diphosphate. An isopentenyl diphosphate-binding site is contributed by histidine 124. The active-site Proton donor is glutamate 126. Threonine 168 serves as a coordination point for (2E)-4-hydroxy-3-methylbut-2-enyl diphosphate. Cysteine 198 lines the [4Fe-4S] cluster pocket. Residues serine 226, serine 227, asparagine 228, and serine 270 each coordinate (2E)-4-hydroxy-3-methylbut-2-enyl diphosphate. Dimethylallyl diphosphate is bound by residues serine 226, serine 227, asparagine 228, and serine 270. Isopentenyl diphosphate contacts are provided by serine 226, serine 227, asparagine 228, and serine 270.

Belongs to the IspH family. Requires [4Fe-4S] cluster as cofactor.

It catalyses the reaction isopentenyl diphosphate + 2 oxidized [2Fe-2S]-[ferredoxin] + H2O = (2E)-4-hydroxy-3-methylbut-2-enyl diphosphate + 2 reduced [2Fe-2S]-[ferredoxin] + 2 H(+). The enzyme catalyses dimethylallyl diphosphate + 2 oxidized [2Fe-2S]-[ferredoxin] + H2O = (2E)-4-hydroxy-3-methylbut-2-enyl diphosphate + 2 reduced [2Fe-2S]-[ferredoxin] + 2 H(+). It functions in the pathway isoprenoid biosynthesis; dimethylallyl diphosphate biosynthesis; dimethylallyl diphosphate from (2E)-4-hydroxy-3-methylbutenyl diphosphate: step 1/1. Its pathway is isoprenoid biosynthesis; isopentenyl diphosphate biosynthesis via DXP pathway; isopentenyl diphosphate from 1-deoxy-D-xylulose 5-phosphate: step 6/6. Catalyzes the conversion of 1-hydroxy-2-methyl-2-(E)-butenyl 4-diphosphate (HMBPP) into a mixture of isopentenyl diphosphate (IPP) and dimethylallyl diphosphate (DMAPP). Acts in the terminal step of the DOXP/MEP pathway for isoprenoid precursor biosynthesis. The sequence is that of 4-hydroxy-3-methylbut-2-enyl diphosphate reductase from Psychrobacter arcticus (strain DSM 17307 / VKM B-2377 / 273-4).